The chain runs to 518 residues: 2-isopropylmalate synthase (518 aa).

One can recognise a Pyruvate carboxyltransferase domain in the interval Ile4–Lys266. Mn(2+) is bound by residues Asp13, His201, His203, and Asn237. The segment at Glu391–Ser518 is regulatory domain.

This sequence belongs to the alpha-IPM synthase/homocitrate synthase family. LeuA type 1 subfamily. As to quaternary structure, homodimer. Mn(2+) is required as a cofactor.

The protein localises to the cytoplasm. It catalyses the reaction 3-methyl-2-oxobutanoate + acetyl-CoA + H2O = (2S)-2-isopropylmalate + CoA + H(+). It functions in the pathway amino-acid biosynthesis; L-leucine biosynthesis; L-leucine from 3-methyl-2-oxobutanoate: step 1/4. In terms of biological role, catalyzes the condensation of the acetyl group of acetyl-CoA with 3-methyl-2-oxobutanoate (2-ketoisovalerate) to form 3-carboxy-3-hydroxy-4-methylpentanoate (2-isopropylmalate). This is 2-isopropylmalate synthase from Bacillus velezensis (strain DSM 23117 / BGSC 10A6 / LMG 26770 / FZB42) (Bacillus amyloliquefaciens subsp. plantarum).